The primary structure comprises 387 residues: S-adenosylmethionine synthase (387 aa).

Glu8 is a Mg(2+) binding site. Residue His14 participates in ATP binding. Residue Glu42 participates in K(+) binding. Positions 55 and 98 each coordinate L-methionine. ATP-binding positions include 166–168 (DGK), 234–237 (SGRF), Asp245, 251–252 (RK), Ala268, Lys272, and Lys276. Asp245 contributes to the L-methionine binding site. Position 276 (Lys276) interacts with L-methionine.

It belongs to the AdoMet synthase family. As to quaternary structure, homotetramer. Mn(2+) serves as cofactor. Requires Mg(2+) as cofactor. The cofactor is Co(2+). It depends on K(+) as a cofactor.

The protein resides in the cytoplasm. The enzyme catalyses L-methionine + ATP + H2O = S-adenosyl-L-methionine + phosphate + diphosphate. It functions in the pathway amino-acid biosynthesis; S-adenosyl-L-methionine biosynthesis; S-adenosyl-L-methionine from L-methionine: step 1/1. Catalyzes the formation of S-adenosylmethionine from methionine and ATP. The reaction comprises two steps that are both catalyzed by the same enzyme: formation of S-adenosylmethionine (AdoMet) and triphosphate, and subsequent hydrolysis of the triphosphate. This Ostreococcus lucimarinus (strain CCE9901) protein is S-adenosylmethionine synthase (METK-1).